We begin with the raw amino-acid sequence, 92 residues long: MKFALALCAAVLLVVLVQAEEKCTPGQVKQQDCNTCTCTPTGVWGCTRKGCQPAKREISCEPGKTFKDKCNTCRCGADGKSAACTLKACPNQ.

The first 19 residues, 1-19 (MKFALALCAAVLLVVLVQA), serve as a signal peptide directing secretion. Pacifastin domains follow at residues 20-54 (EEKCTPGQVKQQDCNTCTCTPTGVWGCTRKGCQPA) and 57-92 (EISCEPGKTFKDKCNTCRCGADGKSAACTLKACPNQ). Disulfide bonds link Cys-23-Cys-38, Cys-33-Cys-51, Cys-36-Cys-46, Cys-60-Cys-75, Cys-70-Cys-89, and Cys-73-Cys-84. Thr-65 carries an O-linked (Fuc) threonine glycan.

This sequence belongs to the protease inhibitor I19 family. As to expression, brain and fat body.

The protein resides in the secreted. In terms of biological role, both LCMI I and II are inhibitors of chymotrypsin and elastase (in vitro). They both inhibit the prophenol oxidase activation cascade. This Locusta migratoria (Migratory locust) protein is Protease inhibitors.